Reading from the N-terminus, the 878-residue chain is E3 ubiquitin-protein ligase BRE1-like 1 (878 aa).

Residues 1 to 21 form a disordered region; the sequence is MASTGEPDRKRRHFSSISPSE. Coiled-coil stretches lie at residues 48 to 76, 200 to 261, 293 to 382, and 537 to 624; these read QNLK…IKEK, QLAL…ELQQ, SDRE…EKLQ, and LDMY…ILKS. Residues 826–865 form an RING-type zinc finger; that stretch reads CKACNDRPKEVVITKCYHLFCNPCVQKLTGTRQKKCPTCS.

Belongs to the BRE1 family. In terms of assembly, may act as a tetramer consisting of two copies of HUB1 and two copies of HUB2. Interacts with MED21. As to expression, ubiquitously expressed.

It localises to the nucleus. The enzyme catalyses S-ubiquitinyl-[E2 ubiquitin-conjugating enzyme]-L-cysteine + [acceptor protein]-L-lysine = [E2 ubiquitin-conjugating enzyme]-L-cysteine + N(6)-ubiquitinyl-[acceptor protein]-L-lysine.. It functions in the pathway protein modification; protein ubiquitination. Its function is as follows. E3 ubiquitin-protein ligase that monoubiquitinates H2B to form H2BK143ub1. H2BK143ub1 gives a specific tag for epigenetic transcriptional activation and is also prerequisite for H3K4me and maybe H3K79me. It thereby plays a central role in histone code and gene regulation. Forms a ubiquitin ligase complex in cooperation with the E2 enzyme UBC2/RAD6. Required for the regulation of flowering time and defense against necrotrophic fungal pathogens. Involved in the control of seed dormancy and germination. In Arabidopsis thaliana (Mouse-ear cress), this protein is E3 ubiquitin-protein ligase BRE1-like 1 (HUB1).